A 943-amino-acid polypeptide reads, in one-letter code: Translation initiation factor IF-2 (943 aa).

The span at 99-113 (VKAAQTQAAPVQPEQ) shows a compositional bias: low complexity. The interval 99-354 (VKAAQTQAAP…LEPNQHAFQA (256 aa)) is disordered. Positions 117–141 (DAVKARAEAAARAEARAKAEAEAAK) are enriched in basic and acidic residues. Residues 145–172 (AKAGNKAKPAAQKPTEAKAETAPVAAET) are compositionally biased toward low complexity. Over residues 173-197 (KPAEPKEKAVKPKHERNGKGKDAKK) the composition is skewed to basic and acidic residues. A compositionally biased stretch (low complexity) spans 200-215 (KPAAPAVPQPVVSAEE). The span at 216-250 (QAQRDEEARRAAALRAHQEALLKEKQERQARREAM) shows a compositional bias: basic and acidic residues. Residues 251–264 (KQQAEQQAKAAQEA) are compositionally biased toward low complexity. 2 stretches are compositionally biased toward basic and acidic residues: residues 295–308 (AKKE…DEGQ) and 319–335 (GGRD…ERVR). Residues 443 to 612 (PRPPVVTVMG…LLEAEVLELT (170 aa)) form the tr-type G domain. The tract at residues 452–459 (GHVDHGKT) is G1. Residue 452-459 (GHVDHGKT) coordinates GTP. The interval 477 to 481 (GITQH) is G2. The G3 stretch occupies residues 498–501 (DTPG). GTP contacts are provided by residues 498–502 (DTPGH) and 552–555 (NKID). The G4 stretch occupies residues 552-555 (NKID). The interval 588 to 590 (SAK) is G5.

Belongs to the TRAFAC class translation factor GTPase superfamily. Classic translation factor GTPase family. IF-2 subfamily.

It localises to the cytoplasm. Its function is as follows. One of the essential components for the initiation of protein synthesis. Protects formylmethionyl-tRNA from spontaneous hydrolysis and promotes its binding to the 30S ribosomal subunits. Also involved in the hydrolysis of GTP during the formation of the 70S ribosomal complex. In Neisseria gonorrhoeae (strain NCCP11945), this protein is Translation initiation factor IF-2.